Here is a 315-residue protein sequence, read N- to C-terminus: MILKNISLLIILFFSISTFSAGHSLKNISITVVAPATGADNKTLSDLKNINGLNLQISSKCFAKGKLPFLASSDEVRFNCLRDALFDESDNIVWSLRGGYGSARIIPDLLKLSKPNKEKFFIGYSDITALHLFLSQEWGWKTIHGSNIADLLKPEQDQGNFTKLAEILKGKVKQVTIDNLVPLNDIAKSSDLVNGKLTGGNLTMVQTSIGTSWQIKTKGKILFLEDVNVVPFRLDRELLHLKQAGLLEDVKAIIFGSFGKDLDATMLVLRNFADSLDIPVFKTNRFGHEKINDPIIYNTNSKIIKSKEFKLVMGV.

Serine 125 serves as the catalytic Nucleophile. Residues glutamate 225 and histidine 288 each act as charge relay system in the active site.

Belongs to the peptidase S66 family.

This Rickettsia conorii (strain ATCC VR-613 / Malish 7) protein is Putative carboxypeptidase RC0549.